Consider the following 907-residue polypeptide: Glutamate receptor 1 (907 aa).

A signal peptide spans 1-18; it reads MPYIFAFFCTGFLGAVVG. Topologically, residues 19–536 are extracellular; sequence ANFPNNIQIG…GVFSFLDPLA (518 aa). N-linked (GlcNAc...) asparagine glycosylation is found at Asn63, Asn249, Asn257, Asn363, Asn401, and Asn406. The cysteines at positions 75 and 323 are disulfide-linked. The L-glutamate site is built by Pro492, Thr494, and Arg499. A helical transmembrane segment spans residues 537–557; that stretch reads YEIWMCIVFAYIGVSVVLFLV. Residues 558–584 lie on the Cytoplasmic side of the membrane; that stretch reads SRFSPYEWHSEEFEEGRDQTTSDQSNE. Residues 585–600 constitute an intramembrane region (helical; Pore-forming); sequence FGIFNSLWFSLGAFMQ. Residues 601–603 lie within the membrane without spanning it; it reads QGC. Cys603 carries S-palmitoyl cysteine lipidation. Topologically, residues 604 to 609 are cytoplasmic; that stretch reads DISPRS. A helical membrane pass occupies residues 610-630; it reads LSGRIVGGVWWFFTLIIISSY. Over 631–805 the chain is Extracellular; it reads TANLAAFLTV…DKTSALSLSN (175 aa). Phosphoserine is present on Ser645. Residues Ser668 and Thr669 each coordinate L-glutamate. The residue at position 710 (Ser710) is a Phosphoserine. Glu719 is an L-glutamate binding site. Cys732 and Cys787 are joined by a disulfide. Residues 806–826 form a helical membrane-spanning segment; that stretch reads VAGVFYILIGGLGLAMLVALI. Over 827 to 907 the chain is Cytoplasmic; the sequence is EFCYKSRSES…SGMPLGATGL (81 aa). Cys829 is lipidated: S-palmitoyl cysteine. Phosphoserine is present on residues Ser849 and Ser863. Residues 857–881 are disordered; sequence STLPRNSGAGASGGSGSGENGRVVS. Over residues 866 to 875 the composition is skewed to gly residues; it reads GASGGSGSGE. Residues 904–907 carry the PDZ-binding motif; that stretch reads ATGL.

The protein belongs to the glutamate-gated ion channel (TC 1.A.10.1) family. GRIA1 subfamily. As to quaternary structure, homotetramer or heterotetramer of pore-forming glutamate receptor subunits. Heteromeric assembly can be the result of both receptor subtype and flip or flop form and according the composition, one partner can be dominant with respect to the fast desensitizing current component, whereas the other can determine the steady-state component. Tetramers may be formed by the dimerization of dimers. Found in a complex with GRIA2, GRIA3, GRIA4, CNIH2, CNIH3, CACNG2, CACNG3, CACNG4, CACNG5, CACNG7 and CACNG8. Interacts with HIP1 and RASGRF2. Interacts with SYNDIG1 and GRIA2. Interacts with DLG1 (via C-terminus). Interacts with LRFN1. Interacts with PRKG2. Interacts with CNIH2 and CACNG2. Interacts with CACNG5; this interaction modulates the gating. Interacts (via C-terminus) with PDLIM4 (via LIM domain); this interaction as well as the interaction of PDLIM4 with alpha-actinin is required for their colocalization in early endosomes. Interacts with SNX27 (via PDZ domain); the interaction is required for recycling to the plasma membrane when endocytosed and prevent degradation in lysosomes. Interacts (via PDZ-binding motif) with SHANK3 (via PDZ domain). Interacts with CACNG3; associates GRIA1 with the adapter protein complex 4 (AP-4) to target GRIA1 to the somatodendritic compartment of neurons. Interacts with CACNG2; this interaction mediates traffick to the plasma membrane and modulation of desensitization. Interacts with CNIH2 and CNIH3; this interaction promotes expression at the plasma membrane and extensively modulates their gating properties by slowing deactivation and desensitization kinetics. Found in a complex with GRIA2, GRIA3, GRIA4, DLG4, CACNG8 and CNIH2. Phosphorylated at Ser-645. Phosphorylated at Ser-710 by PKC. Phosphorylated at Ser-849 by PKC, PKA and CAMK2. Phosphorylated at Ser-863 by PKC, PKA and PRKG2. Phosphorylation of Ser-863 is reduced by induction of long-term depression and increased by induction of long-term potentiation. In terms of processing, palmitoylated. Depalmitoylated by CPT1C and upon L-glutamate stimulation. ZDHHC3/GODZ specifically palmitoylates Cys-603, which leads to Golgi retention and decreased cell surface expression. In contrast, Cys-829 palmitoylation does not affect cell surface expression but regulates stimulation-dependent endocytosis. In terms of tissue distribution, expressed in the outer plexiform layer of the retina of the eye (at protein level). Expressed in the forebrain and hippocampus (at protein level).

The protein localises to the cell membrane. The protein resides in the endoplasmic reticulum membrane. Its subcellular location is the postsynaptic cell membrane. It is found in the postsynaptic density membrane. It localises to the cell projection. The protein localises to the dendrite. The protein resides in the dendritic spine. Its subcellular location is the early endosome membrane. It is found in the recycling endosome membrane. It localises to the presynapse. The protein localises to the synapse. It catalyses the reaction Ca(2+)(in) = Ca(2+)(out). The enzyme catalyses Na(+)(in) = Na(+)(out). It carries out the reaction Mg(2+)(in) = Mg(2+)(out). The catalysed reaction is Li(+)(in) = Li(+)(out). It catalyses the reaction K(+)(in) = K(+)(out). The enzyme catalyses Sr(2+)(in) = Sr(2+)(out). In terms of biological role, ionotropic glutamate receptor that functions as a ligand-gated cation channel, gated by L-glutamate and glutamatergic agonists such as alpha-amino-3-hydroxy-5-methyl-4-isoxazolepropionic acid (AMPA), quisqualic acid, and kainic acid. L-glutamate acts as an excitatory neurotransmitter at many synapses in the central nervous system. Binding of the excitatory neurotransmitter L-glutamate induces a conformation change, leading to the opening of the cation channel, and thereby converts the chemical signal to an electrical impulse upon entry of monovalent and divalent cations such as sodium and calcium. The receptor then desensitizes rapidly and enters in a transient inactive state, characterized by the presence of bound agonist. In the presence of CACNG2 or CACNG4 or CACNG7 or CACNG8, shows resensitization which is characterized by a delayed accumulation of current flux upon continued application of L-glutamate. Calcium (Ca(2+)) permeability depends on subunits composition and, heteromeric channels containing edited GRIA2 subunit are calcium-impermeable. Also permeable to other divalents cations such as strontium(2+) and magnesium(2+) and monovalent cations such as potassium(1+) and lithium(1+). In Mus musculus (Mouse), this protein is Glutamate receptor 1.